Reading from the N-terminus, the 165-residue chain is Probable deoxyuridine 5'-triphosphate nucleotidohydrolase (165 aa).

Over residues 39–49 (GRIDTDGKTIG) the composition is skewed to basic and acidic residues. Residues 39–64 (GRIDTDGKTIGDRSPVTPTADEDSTD) are disordered.

Belongs to the dCTP deaminase family. Archaeal dUTPase subfamily.

It catalyses the reaction dUTP + H2O = dUMP + diphosphate + H(+). The protein operates within pyrimidine metabolism; dUMP biosynthesis; dUMP from dCTP (dUTP route): step 2/2. Its function is as follows. This enzyme is involved in nucleotide metabolism: it produces dUMP, the immediate precursor of thymidine nucleotides and it decreases the intracellular concentration of dUTP so that uracil cannot be incorporated into DNA. This Halobacterium salinarum (strain ATCC 29341 / DSM 671 / R1) protein is Probable deoxyuridine 5'-triphosphate nucleotidohydrolase.